The chain runs to 449 residues: Putative glycosyltransferase 7 (449 aa).

At 1 to 32 (MVSPETSSSHYQSSPMAKYAGTRTRPVVCISD) the chain is on the cytoplasmic side. Residues 33-53 (VVLFLGGAFMSLILVWSFFSF) traverse the membrane as a helical; Signal-anchor for type II membrane protein segment. Over 54-449 (SSISPNLTVK…VPFDYPDEPW (396 aa)) the chain is Lumenal. 3 N-linked (GlcNAc...) asparagine glycosylation sites follow: Asn-59, Asn-123, and Asn-332.

Belongs to the glycosyltransferase 34 family.

The protein localises to the golgi apparatus membrane. Functionally, probable glycosyltransferase that may be involved in the biosynthesis of xyloglucan. The polypeptide is Putative glycosyltransferase 7 (GT7) (Arabidopsis thaliana (Mouse-ear cress)).